The sequence spans 306 residues: 2-phospho-L-lactate transferase (306 aa).

7,8-didemethyl-8-hydroxy-5-deazariboflavin contacts are provided by Asp54 and Arg93.

Belongs to the CofD family. In terms of assembly, homodimer. Requires Mg(2+) as cofactor.

The catalysed reaction is (2S)-lactyl-2-diphospho-5'-guanosine + 7,8-didemethyl-8-hydroxy-5-deazariboflavin = oxidized coenzyme F420-0 + GMP + H(+). It participates in cofactor biosynthesis; coenzyme F420 biosynthesis. In terms of biological role, catalyzes the transfer of the 2-phospholactate moiety from (2S)-lactyl-2-diphospho-5'-guanosine to 7,8-didemethyl-8-hydroxy-5-deazariboflavin (FO) with the formation of oxidized coenzyme F420-0 and GMP. This Methanothermobacter thermautotrophicus (strain ATCC 29096 / DSM 1053 / JCM 10044 / NBRC 100330 / Delta H) (Methanobacterium thermoautotrophicum) protein is 2-phospho-L-lactate transferase.